A 364-amino-acid chain; its full sequence is Aminomethyltransferase (364 aa).

This sequence belongs to the GcvT family. The glycine cleavage system is composed of four proteins: P, T, L and H.

It carries out the reaction N(6)-[(R)-S(8)-aminomethyldihydrolipoyl]-L-lysyl-[protein] + (6S)-5,6,7,8-tetrahydrofolate = N(6)-[(R)-dihydrolipoyl]-L-lysyl-[protein] + (6R)-5,10-methylene-5,6,7,8-tetrahydrofolate + NH4(+). The glycine cleavage system catalyzes the degradation of glycine. In Shewanella baltica (strain OS155 / ATCC BAA-1091), this protein is Aminomethyltransferase.